The primary structure comprises 305 residues: tRNA pseudouridine synthase B (305 aa).

The active-site Nucleophile is aspartate 39.

It belongs to the pseudouridine synthase TruB family. Type 1 subfamily.

The catalysed reaction is uridine(55) in tRNA = pseudouridine(55) in tRNA. Functionally, responsible for synthesis of pseudouridine from uracil-55 in the psi GC loop of transfer RNAs. The sequence is that of tRNA pseudouridine synthase B from Staphylococcus epidermidis (strain ATCC 35984 / DSM 28319 / BCRC 17069 / CCUG 31568 / BM 3577 / RP62A).